The primary structure comprises 302 residues: Lactoylglutathione lyase (302 aa).

VOC domains lie at 11–153 and 166–301; these read KLNH…LVSQ and RFNH…VIEQ. H14 serves as a coordination point for Zn(2+). R18 contacts substrate. E75 serves as a coordination point for Zn(2+). N79, R99, and H103 together coordinate substrate. Zn(2+) is bound by residues H103 and E149. Residue E149 is the Proton donor/acceptor of the active site.

The protein belongs to the glyoxalase I family. Monomer. Zn(2+) is required as a cofactor. Cu(2+) serves as cofactor. It depends on Ni(2+) as a cofactor. Requires Mn(2+) as cofactor.

The catalysed reaction is (R)-S-lactoylglutathione = methylglyoxal + glutathione. It participates in secondary metabolite metabolism; methylglyoxal degradation; (R)-lactate from methylglyoxal: step 1/2. Catalyzes the conversion of hemimercaptal, formed from methylglyoxal and glutathione, to S-lactoylglutathione. The protein is Lactoylglutathione lyase (glo1) of Schizosaccharomyces pombe (strain 972 / ATCC 24843) (Fission yeast).